The following is a 202-amino-acid chain: Superoxide dismutase [Mn/Fe] (202 aa).

4 residues coordinate Fe(3+): His-26, His-80, Asp-163, and His-167. Residues His-26, His-80, Asp-163, and His-167 each coordinate Mn(2+).

Belongs to the iron/manganese superoxide dismutase family. In terms of assembly, homodimer. The cofactor is Mn(2+). Fe(3+) is required as a cofactor.

The enzyme catalyses 2 superoxide + 2 H(+) = H2O2 + O2. In terms of biological role, destroys superoxide anion radicals which are normally produced within the cells and which are toxic to biological systems. Catalyzes the dismutation of superoxide anion radicals into O2 and H2O2 by successive reduction and oxidation of the transition metal ion at the active site. This chain is Superoxide dismutase [Mn/Fe] (sodB), found in Methylomonas sp. (strain J).